Here is a 178-residue protein sequence, read N- to C-terminus: MSGGKYVDSEGHLYTLPIREQGNIYKPNNKAMAEDMNEKQVYDAHTKEIDLVNRDPKHLNDDVVKIDFEDVIAEPEGTHSFDGIWKASFTTFTVTKYWFYRLLSGIFGIPMALIWGVYFAILSFLHIWAVVPCIKSFLIEIQCISRVYSIYVHTFCDPLFEAIGKIFSNIRISTQKEI.

Position 2 is an N-acetylserine (Ser2). Ser2 is modified (phosphoserine). The segment at 2 to 94 (SGGKYVDSEG…WKASFTTFTV (93 aa)) is required for homooligomerization. Residues 2–104 (SGGKYVDSEG…TKYWFYRLLS (103 aa)) are Cytoplasmic-facing. Residue Lys5 is modified to N6-acetyllysine; alternate. Lys5 participates in a covalent cross-link: Glycyl lysine isopeptide (Lys-Gly) (interchain with G-Cter in ubiquitin); alternate. The residue at position 6 (Tyr6) is a Phosphotyrosine. Ser9 carries the phosphoserine modification. Position 14 is a phosphotyrosine; by ABL1 (Tyr14). A Phosphotyrosine modification is found at Tyr25. Glycyl lysine isopeptide (Lys-Gly) (interchain with G-Cter in ubiquitin) cross-links involve residues Lys26, Lys30, Lys39, Lys47, and Lys57. An interaction with CAVIN3 region spans residues 82-94 (DGIWKASFTTFTV). The segment at residues 105-125 (GIFGIPMALIWGVYFAILSFL) is an intramembrane region (helical). Residues 126 to 178 (HIWAVVPCIKSFLIEIQCISRVYSIYVHTFCDPLFEAIGKIFSNIRISTQKEI) lie on the Cytoplasmic side of the membrane. Residues 131-142 (VPCIKSFLIEIQ) form an interacts with SPRY1, SPRY2, SPRY3 and SPRY4 region. Residues Cys133, Cys143, and Cys156 are each lipidated (S-palmitoyl cysteine). The interacts with SPRY1, SPRY2, and SPRY4 stretch occupies residues 149–160 (SIYVHTFCDPLF). Residues 167–178 (FSNIRISTQKEI) are interacts with SPRY1, SPRY2, SPRY3 and SPRY4.

The protein belongs to the caveolin family. Homooligomer. Interacts with GLIPR2. Interacts with NOSTRIN. Interacts with SNAP25 and STX1A. Interacts (via the N-terminus) with DPP4; the interaction is direct. Interacts with CTNNB1, CDH1 and JUP. Interacts with PACSIN2; this interaction induces membrane tubulation. Interacts with SLC7A9. Interacts with BMX and BTK. Interacts with TGFBR1. Interacts with CAVIN3 (via leucine-zipper domain) in a cholesterol-sensitive manner. Interacts with CAVIN1. Interacts with EHD2 in a cholesterol-dependent manner. Forms a ternary complex with UBXN6 and VCP; mediates CAV1 targeting to lysosomes for degradation. Interacts with ABCG1; this interaction regulates ABCG1-mediated cholesterol efflux. Interacts with NEU3; this interaction enhances NEU3 sialidase activity within caveola. Interacts (via C-terminus) with SPRY1, SPRY2 (via C-terminus), SPRY3, and SPRY4. Interacts with IGFBP5; this interaction allows trafficking of IGFBP5 from the plasma membrane to the nucleus. Phosphorylated at Tyr-14 by ABL1 in response to oxidative stress. In terms of processing, ubiquitinated. Undergo monoubiquitination and multi- and/or polyubiquitination. Monoubiquitination of N-terminal lysines promotes integration in a ternary complex with UBXN6 and VCP which promotes oligomeric CAV1 targeting to lysosomes for degradation. Ubiquitinated by ZNRF1; leading to degradation and modulation of the TLR4-mediated immune response.

Its subcellular location is the golgi apparatus membrane. The protein localises to the cell membrane. The protein resides in the membrane. It localises to the caveola. It is found in the membrane raft. Functionally, may act as a scaffolding protein within caveolar membranes. Forms a stable heterooligomeric complex with CAV2 that targets to lipid rafts and drives caveolae formation. Mediates the recruitment of CAVIN proteins (CAVIN1/2/3/4) to the caveolae. Interacts directly with G-protein alpha subunits and can functionally regulate their activity. Involved in the costimulatory signal essential for T-cell receptor (TCR)-mediated T-cell activation. Its binding to DPP4 induces T-cell proliferation and NF-kappa-B activation in a T-cell receptor/CD3-dependent manner. Recruits CTNNB1 to caveolar membranes and may regulate CTNNB1-mediated signaling through the Wnt pathway. Negatively regulates TGFB1-mediated activation of SMAD2/3 by mediating the internalization of TGFBR1 from membrane rafts leading to its subsequent degradation. Binds 20(S)-hydroxycholesterol (20(S)-OHC). This is Caveolin-1 (CAV1) from Echinops telfairi (Lesser hedgehog tenrec).